The primary structure comprises 737 residues: MSTNPKPQRKTKRNTNRRPQDVKFPGGGQIVGGVYLLPRRGPRLGVRATRKTSERSQPRGRRQPIPKDRRSTGKSWGKPGYPWPLYGNEGCGWAGWLLSPRGSRPTWGPTDPRHRSRNLGKVIDTLTCGFADLMGYIPVVGAPVGGVARALAHGVRVLEDGINYATGNLPGCSFSIFLLALLSCVTVPVSAVEVRNISSSYYATNDCSNNSITWQLTNAVLHLPGCVPCENDNGTLRCWIQVTPNVAVKHRGALTHNLRTHVDMIVMAATVCSALYVGDICGAVMIASQAFIISPERHNFTQECNCSIYQGHITGHRMAWDMMLNWSPTLTMILAYAARVPELVLEVVFGGHWGVVFGLAYFSMQGAWAKVIAILLLVAGVDASTQVTGGQAAHTVRGVASIFSPGSRQDISLINTNGSWHINRTALNCNDSLQTGFFAALFYVRRFNSSGCPERLSSCRKLDDFRIGWGTLEYETNVTNEEDMRPYCWHYPPKPCGIVSAKTVCGPVYCFTPSPVVVGTTDRQGVPTYSWGENETDVFLLNSTRPPRGAWFGCTWMNGTGFTKTCGAPPCRIRRDYNGTLDLLCPTDCFRKHPDTTYLKCGAGPWLTPRCLVDYPYRLWHYPCTVNFTIFKVRMYVGGVEHRLDAACNFTRGDRCRLEDRDRSQQSPLLHSTTEWAVLPCSYSDLPALSTGLLHLHQNIVDVQYLYGLSPAITRHIVKWEWVILLFLLLADARVCA.

The residue at position 2 (S2) is an N-acetylserine; by host. Residues 2 to 23 form an interaction with STAT1 region; it reads STNPKPQRKTKRNTNRRPQDVK. Residues 2 to 58 are interaction with EIF2AK2/PKR; that stretch reads STNPKPQRKTKRNTNRRPQDVKFPGGGQIVGGVYLLPRRGPRLGVRATRKTSERSQP. Residues 2–59 form an interaction with DDX3X region; that stretch reads STNPKPQRKTKRNTNRRPQDVKFPGGGQIVGGVYLLPRRGPRLGVRATRKTSERSQPR. A disordered region spans residues 2 to 75; sequence STNPKPQRKT…PKDRRSTGKS (74 aa). The Cytoplasmic segment spans residues 2–168; it reads STNPKPQRKT…EDGINYATGN (167 aa). 2 consecutive short sequence motifs (nuclear localization signal) follow at residues 5–13 and 38–43; these read PKPQRKTKR and PRRGPR. Residues 7–16 show a composition bias toward basic residues; the sequence is PQRKTKRNTN. Low complexity predominate over residues 32–47; that stretch reads GGVYLLPRRGPRLGVR. A Phosphoserine; by host modification is found at S53. 2 short sequence motifs (nuclear localization signal) span residues 58–64 and 66–71; these read PRGRRQP and PKDRRS. Phosphoserine; by host occurs at positions 99 and 116. Residues 112–152 form an important for endoplasmic reticulum and mitochondrial localization region; sequence PRHRSRNLGKVIDTLTCGFADLMGYIPVVGAPVGGVARALA. An interaction with APOA2 region spans residues 122–173; it reads VIDTLTCGFADLMGYIPVVGAPVGGVARALAHGVRVLEDGINYATGNLPGCS. The segment at 164-167 is important for lipid droplets localization; that stretch reads YATG. A helical membrane pass occupies residues 169 to 189; sequence LPGCSFSIFLLALLSCVTVPV. A propeptide spans 178-191 (ER anchor for the core protein, removed in mature form by host signal peptidase); that stretch reads LLALLSCVTVPVSA. The Lumenal segment spans residues 190–358; sequence SAVEVRNISS…FGGHWGVVFG (169 aa). N-linked (GlcNAc...) asparagine; by host glycans are attached at residues N196, N209, and N233. Residues 265–296 form an important for fusion region; it reads IVMAATVCSALYVGDICGAVMIASQAFIISPE. An N-linked (GlcNAc...) asparagine; by host glycan is attached at N305. A helical membrane pass occupies residues 359–379; it reads LAYFSMQGAWAKVIAILLLVA. Residues 380–729 are Lumenal-facing; that stretch reads GVDASTQVTG…WEWVILLFLL (350 aa). Residues 385-411 are HVR1; the sequence is TQVTGGQAAHTVRGVASIFSPGSRQDI. N-linked (GlcNAc...) (high mannose) asparagine; by host glycosylation is found at N417, N423, N430, and N448. 4 disulfides stabilise this stretch: C429–C554, C452–C459, C488–C496, and C505–C510. Residues 474–481 are HVR2; sequence YETNVTNE. The interval 482–495 is CD81-binding 1; that stretch reads EDMRPYCWHYPPKP. Residue N542 is glycosylated (N-linked (GlcNAc...) asparagine; by host). The tract at residues 546 to 553 is CD81-binding 2; the sequence is PPRGAWFG. N558 is a glycosylation site (N-linked (GlcNAc...) (high mannose) asparagine; by host). 4 cysteine pairs are disulfide-bonded: C566–C571, C585–C589, C601–C624, and C611–C648. Residues N627 and N649 are each glycosylated (N-linked (GlcNAc...) (high mannose) asparagine; by host). A disulfide bridge links C656 with C681. The PKR/eIF2-alpha phosphorylation homology domain (PePHD) stretch occupies residues 664-675; it reads SQQSPLLHSTTE. A helical transmembrane segment spans residues 730 to 737; the sequence is LADARVCA.

Belongs to the hepacivirus polyprotein family. Homooligomer. Interacts with E1 (via C-terminus). Interacts with the non-structural protein 5A. Interacts (via N-terminus) with host STAT1 (via SH2 domain); this interaction results in decreased STAT1 phosphorylation and ubiquitin-mediated proteasome-dependent STAT1 degradation, leading to decreased IFN-stimulated gene transcription. Interacts with host STAT3; this interaction constitutively activates STAT3. Interacts with host LTBR receptor. Interacts with host TNFRSF1A receptor and possibly induces apoptosis. Interacts with host HNRPK. Interacts with host YWHAE. Interacts with host UBE3A/E6AP. Interacts with host DDX3X. Interacts with host APOA2. Interacts with host RXRA protein. Interacts with host SP110 isoform 3/Sp110b; this interaction sequesters the transcriptional corepressor SP110 away from the nucleus. Interacts with host CREB3 nuclear transcription protein; this interaction triggers cell transformation. Interacts with host ACY3. Interacts with host C1QR1. Interacts with host RBM24; this interaction, which enhances the interaction of the mature core protein with 5'-UTR, may inhibit viral translation and favor replication. Interacts with host EIF2AK2/PKR; this interaction induces the autophosphorylation of EIF2AK2. Part of the viral assembly initiation complex composed of NS2, E1, E2, NS3, NS4A, NS5A and the mature core protein. In terms of assembly, forms a heterodimer with envelope glycoprotein E2. Interacts with mature core protein. Interacts with protease NS2. The heterodimer E1/E2 interacts with host CLDN1; this interaction plays a role in viral entry into host cell. Interacts with host SPSB2 (via C-terminus). Part of the viral assembly initiation complex composed of NS2, E1, E2, NS3, NS4A, NS5A and the mature core protein. As to quaternary structure, forms a heterodimer with envelope glycoprotein E1. Interacts with host CD81 and SCARB1 receptors; these interactions play a role in viral entry into host cell. Interacts with host EIF2AK2/PKR; this interaction inhibits EIF2AK2 and probably allows the virus to evade the innate immune response. Interacts with host CD209/DC-SIGN and CLEC4M/DC-SIGNR. Interact with host SPCS1; this interaction is essential for viral particle assembly. Interacts with protease NS2. The heterodimer E1/E2 interacts with host CLDN1; this interaction plays a role in viral entry into host cell. Part of the viral assembly initiation complex composed of NS2, E1, E2, NS3, NS4A, NS5A and the mature core protein. Specific enzymatic cleavages in vivo yield mature proteins. The structural proteins, core, E1, E2 and p7 are produced by proteolytic processing by host signal peptidases. The core protein precursor is synthesized as a 23 kDa, which is retained in the ER membrane through the hydrophobic signal peptide. Cleavage by the signal peptidase releases the 21 kDa mature core protein. The cleavage of the core protein precursor occurs between aminoacids 176 and 188 but the exact cleavage site is not known. Some degraded forms of the core protein appear as well during the course of infection. The other proteins (p7, NS2, NS3, NS4A, NS4B, NS5A and NS5B) are cleaved by the viral proteases. Autoprocessing between NS2 and NS3 is mediated by the NS2 cysteine protease catalytic domain and regulated by the NS3 N-terminal domain. Post-translationally, phosphorylated by host PKC and PKA. In terms of processing, ubiquitinated; mediated by UBE3A and leading to core protein subsequent proteasomal degradation. Highly N-glycosylated.

It is found in the host endoplasmic reticulum membrane. Its subcellular location is the host mitochondrion membrane. It localises to the virion. The protein localises to the host cytoplasm. The protein resides in the host nucleus. It is found in the host lipid droplet. Its subcellular location is the virion membrane. Packages viral RNA to form a viral nucleocapsid, and promotes virion budding. Participates in the viral particle production as a result of its interaction with the non-structural protein 5A. Binds RNA and may function as a RNA chaperone to induce the RNA structural rearrangements taking place during virus replication. Modulates viral translation initiation by interacting with viral IRES and 40S ribosomal subunit. Affects various cell signaling pathways, host immunity and lipid metabolism. Prevents the establishment of cellular antiviral state by blocking the interferon-alpha/beta (IFN-alpha/beta) and IFN-gamma signaling pathways and by blocking the formation of phosphorylated STAT1 and promoting ubiquitin-mediated proteasome-dependent degradation of STAT1. Activates STAT3 leading to cellular transformation. Regulates the activity of cellular genes, including c-myc and c-fos. May repress the promoter of p53, and sequester CREB3 and SP110 isoform 3/Sp110b in the cytoplasm. Represses cell cycle negative regulating factor CDKN1A, thereby interrupting an important check point of normal cell cycle regulation. Targets transcription factors involved in the regulation of inflammatory responses and in the immune response: suppresses TNF-induced NF-kappa-B activation, and activates AP-1. Binds to dendritic cells (DCs) via C1QR1, resulting in down-regulation of T-lymphocytes proliferation. Alters lipid metabolism by interacting with hepatocellular proteins involved in lipid accumulation and storage. Induces up-regulation of FAS promoter activity, and thereby contributes to the increased triglyceride accumulation in hepatocytes (steatosis). Functionally, forms a heterodimer with envelope glycoprotein E2, which mediates virus attachment to the host cell, virion internalization through clathrin-dependent endocytosis and fusion with host membrane. Fusion with the host cell is most likely mediated by both E1 and E2, through conformational rearrangements of the heterodimer required for fusion rather than a classical class II fusion mechanism. E1/E2 heterodimer binds host apolipoproteins such as APOB and ApoE thereby forming a lipo-viro-particle (LVP). APOE associated to the LVP allows the initial virus attachment to cell surface receptors such as the heparan sulfate proteoglycans (HSPGs), syndecan-1 (SDC1), syndecan-1 (SDC2), the low-density lipoprotein receptor (LDLR) and scavenger receptor class B type I (SCARB1). The cholesterol transfer activity of SCARB1 allows E2 exposure and binding of E2 to SCARB1 and the tetraspanin CD81. E1/E2 heterodimer binding on CD81 activates the epithelial growth factor receptor (EGFR) signaling pathway. Diffusion of the complex E1-E2-EGFR-SCARB1-CD81 to the cell lateral membrane allows further interaction with Claudin 1 (CLDN1) and occludin (OCLN) to finally trigger HCV entry. Its function is as follows. Forms a heterodimer with envelope glycoprotein E1, which mediates virus attachment to the host cell, virion internalization through clathrin-dependent endocytosis and fusion with host membrane. Fusion with the host cell is most likely mediated by both E1 and E2, through conformational rearrangements of the heterodimer required for fusion rather than a classical class II fusion mechanism. The interaction between envelope glycoprotein E2 and host apolipoprotein E/APOE allows the proper assembly, maturation and infectivity of the viral particles. This interaction is probably promoted via the up-regulation of cellular autophagy by the virus. E1/E2 heterodimer binds host apolipoproteins such as APOB and APOE thereby forming a lipo-viro-particle (LVP). APOE associated to the LVP allows the initial virus attachment to cell surface receptors such as the heparan sulfate proteoglycans (HSPGs), syndecan-1 (SDC1), syndecan-1 (SDC2), the low-density lipoprotein receptor (LDLR) and scavenger receptor class B type I (SCARB1). The cholesterol transfer activity of SCARB1 allows E2 exposure and binding of E2 to SCARB1 and the tetraspanin CD81. E1/E2 heterodimer binding on CD81 activates the epithelial growth factor receptor (EGFR) signaling pathway. Diffusion of the complex E1-E2-EGFR-SCARB1-CD81 to the cell lateral membrane allows further interaction with Claudin 1 (CLDN1) and occludin (OCLN) to finally trigger HCV entry. Inhibits host EIF2AK2/PKR activation, preventing the establishment of an antiviral state. Viral ligand for CD209/DC-SIGN and CLEC4M/DC-SIGNR, which are respectively found on dendritic cells (DCs), and on liver sinusoidal endothelial cells and macrophage-like cells of lymph node sinuses. These interactions allow the capture of circulating HCV particles by these cells and subsequent facilitated transmission to permissive cells such as hepatocytes and lymphocyte subpopulations. This is Genome polyprotein from Hepatitis C virus (isolate HC-J7) (HCV).